We begin with the raw amino-acid sequence, 460 residues long: Argininosuccinate lyase (460 aa).

The protein belongs to the lyase 1 family. Argininosuccinate lyase subfamily.

Its subcellular location is the cytoplasm. The enzyme catalyses 2-(N(omega)-L-arginino)succinate = fumarate + L-arginine. It participates in amino-acid biosynthesis; L-arginine biosynthesis; L-arginine from L-ornithine and carbamoyl phosphate: step 3/3. This chain is Argininosuccinate lyase, found in Maridesulfovibrio salexigens (strain ATCC 14822 / DSM 2638 / NCIMB 8403 / VKM B-1763) (Desulfovibrio salexigens).